A 566-amino-acid chain; its full sequence is Hemocyanin B chain (566 aa).

C82 and C87 form a disulfide bridge. The Cu cation site is built by H183, H187, H213, H309, H313, and H347.

It belongs to the tyrosinase family. Hemocyanin subfamily. Hemolymph.

It is found in the secreted. The protein resides in the extracellular space. Functionally, hemocyanins are copper-containing oxygen carriers occurring freely dissolved in the hemolymph of many mollusks and arthropods. The polypeptide is Hemocyanin B chain (Astacus leptodactylus (Turkish narrow-clawed crayfish)).